Reading from the N-terminus, the 208-residue chain is Exosome complex component CSL4 homolog (208 aa).

In terms of assembly, component of the RNA exosome complex. As to expression, ubiquitously expressed.

The protein localises to the nucleus. It localises to the nucleolus. The protein resides in the nucleoplasm. In terms of biological role, non-catalytic component of the RNA exosome complex which has 3'-&gt;5' exoribonuclease activity and participates in a multitude of cellular RNA processing and degradation events. Involved in regulation of antisense ribosomal siRNA production. Involved in response to cold-warm shock. The protein is Exosome complex component CSL4 homolog of Caenorhabditis elegans.